The following is a 609-amino-acid chain: Threonine--tRNA ligase (609 aa).

A catalytic region spans residues Asp-215 to Pro-506. Zn(2+)-binding residues include Cys-307, His-358, and His-483.

Belongs to the class-II aminoacyl-tRNA synthetase family. As to quaternary structure, homodimer. Requires Zn(2+) as cofactor.

It is found in the cytoplasm. It carries out the reaction tRNA(Thr) + L-threonine + ATP = L-threonyl-tRNA(Thr) + AMP + diphosphate + H(+). Its function is as follows. Catalyzes the attachment of threonine to tRNA(Thr) in a two-step reaction: L-threonine is first activated by ATP to form Thr-AMP and then transferred to the acceptor end of tRNA(Thr). Also edits incorrectly charged L-seryl-tRNA(Thr). The chain is Threonine--tRNA ligase from Campylobacter hominis (strain ATCC BAA-381 / DSM 21671 / CCUG 45161 / LMG 19568 / NCTC 13146 / CH001A).